The chain runs to 119 residues: Large ribosomal subunit protein bL12 (119 aa).

This sequence belongs to the bacterial ribosomal protein bL12 family. Homodimer. Part of the ribosomal stalk of the 50S ribosomal subunit. Forms a multimeric L10(L12)X complex, where L10 forms an elongated spine to which 2 to 4 L12 dimers bind in a sequential fashion. Binds GTP-bound translation factors.

In terms of biological role, forms part of the ribosomal stalk which helps the ribosome interact with GTP-bound translation factors. Is thus essential for accurate translation. In Bacillus cytotoxicus (strain DSM 22905 / CIP 110041 / 391-98 / NVH 391-98), this protein is Large ribosomal subunit protein bL12.